Here is a 941-residue protein sequence, read N- to C-terminus: Glycine dehydrogenase (decarboxylating) (941 aa).

Lys-692 carries the N6-(pyridoxal phosphate)lysine modification.

This sequence belongs to the GcvP family. As to quaternary structure, the glycine cleavage system is composed of four proteins: P, T, L and H. It depends on pyridoxal 5'-phosphate as a cofactor.

The enzyme catalyses N(6)-[(R)-lipoyl]-L-lysyl-[glycine-cleavage complex H protein] + glycine + H(+) = N(6)-[(R)-S(8)-aminomethyldihydrolipoyl]-L-lysyl-[glycine-cleavage complex H protein] + CO2. Functionally, the glycine cleavage system catalyzes the degradation of glycine. The P protein binds the alpha-amino group of glycine through its pyridoxal phosphate cofactor; CO(2) is released and the remaining methylamine moiety is then transferred to the lipoamide cofactor of the H protein. The chain is Glycine dehydrogenase (decarboxylating) from Mycobacterium avium (strain 104).